The following is a 455-amino-acid chain: Exodeoxyribonuclease 7 large subunit (455 aa).

It belongs to the XseA family. In terms of assembly, heterooligomer composed of large and small subunits.

It is found in the cytoplasm. It carries out the reaction Exonucleolytic cleavage in either 5'- to 3'- or 3'- to 5'-direction to yield nucleoside 5'-phosphates.. Functionally, bidirectionally degrades single-stranded DNA into large acid-insoluble oligonucleotides, which are then degraded further into small acid-soluble oligonucleotides. In Koribacter versatilis (strain Ellin345), this protein is Exodeoxyribonuclease 7 large subunit.